The sequence spans 22 residues: Unknown protein 10 (22 aa).

This chain is Unknown protein 10, found in Pseudotsuga menziesii (Douglas-fir).